Reading from the N-terminus, the 307-residue chain is Small ribosomal subunit biogenesis GTPase RsgA (307 aa).

One can recognise a CP-type G domain in the interval His-78 to Leu-240. Residues Asn-128–Asp-131 and Gly-182–Thr-190 contribute to the GTP site. Residues Cys-264, Cys-269, His-271, and Cys-277 each contribute to the Zn(2+) site.

It belongs to the TRAFAC class YlqF/YawG GTPase family. RsgA subfamily. Monomer. Associates with 30S ribosomal subunit, binds 16S rRNA. Zn(2+) is required as a cofactor.

It localises to the cytoplasm. One of several proteins that assist in the late maturation steps of the functional core of the 30S ribosomal subunit. Helps release RbfA from mature subunits. May play a role in the assembly of ribosomal proteins into the subunit. Circularly permuted GTPase that catalyzes slow GTP hydrolysis, GTPase activity is stimulated by the 30S ribosomal subunit. This chain is Small ribosomal subunit biogenesis GTPase RsgA, found in Cytophaga hutchinsonii (strain ATCC 33406 / DSM 1761 / CIP 103989 / NBRC 15051 / NCIMB 9469 / D465).